A 104-amino-acid chain; its full sequence is L-rhamnose mutarotase (104 aa).

Tyrosine 18 contributes to the substrate binding site. Histidine 22 serves as the catalytic Proton donor. Substrate contacts are provided by residues tyrosine 41 and 76 to 77 (WW).

It belongs to the rhamnose mutarotase family. As to quaternary structure, homodimer.

It is found in the cytoplasm. The catalysed reaction is alpha-L-rhamnose = beta-L-rhamnose. Its pathway is carbohydrate metabolism; L-rhamnose metabolism. Involved in the anomeric conversion of L-rhamnose. This is L-rhamnose mutarotase from Escherichia coli O17:K52:H18 (strain UMN026 / ExPEC).